A 147-amino-acid chain; its full sequence is MVHFTAEEKAAITSLWGKMNVEEAGGESLGRLLVVYPWTQRFFDNFGNLSSPSAILGNPKVKAHGKKVLTSFGDAIKNMDNLKTTFAKLSELHCDKLHVDPENFRLLGNVMVIILATHFGKEFTPEVQAAWQKLVSAVAIALGHKYH.

In terms of domain architecture, Globin spans His3–His147. 2 positions are modified to phosphoserine: Ser14 and Ser51. Residues His64 and His93 each coordinate heme b.

It belongs to the globin family. In terms of assembly, heterotetramer of two alpha chains and two epsilon chains in early embryonic hemoglobin Gower-2; two zeta chains and two epsilon chains in early embryonic hemoglobin Gower-1. Red blood cells.

Functionally, the epsilon chain is a beta-type chain of early mammalian embryonic hemoglobin. This Leontopithecus rosalia (Golden lion tamarin) protein is Hemoglobin subunit epsilon (HBE1).